Here is a 142-residue protein sequence, read N- to C-terminus: Large ribosomal subunit protein uL13 (142 aa).

This sequence belongs to the universal ribosomal protein uL13 family. In terms of assembly, part of the 50S ribosomal subunit.

In terms of biological role, this protein is one of the early assembly proteins of the 50S ribosomal subunit, although it is not seen to bind rRNA by itself. It is important during the early stages of 50S assembly. The chain is Large ribosomal subunit protein uL13 from Bordetella bronchiseptica (strain ATCC BAA-588 / NCTC 13252 / RB50) (Alcaligenes bronchisepticus).